The following is a 272-amino-acid chain: 3-methyl-2-oxobutanoate hydroxymethyltransferase (272 aa).

Asp51 and Asp90 together coordinate Mg(2+). 3-methyl-2-oxobutanoate contacts are provided by residues 51 to 52 (DS), Asp90, and Lys118. Glu120 serves as a coordination point for Mg(2+). Residue Glu187 is the Proton acceptor of the active site.

It belongs to the PanB family. As to quaternary structure, homodecamer; pentamer of dimers. Mg(2+) is required as a cofactor.

Its subcellular location is the cytoplasm. The catalysed reaction is 3-methyl-2-oxobutanoate + (6R)-5,10-methylene-5,6,7,8-tetrahydrofolate + H2O = 2-dehydropantoate + (6S)-5,6,7,8-tetrahydrofolate. It functions in the pathway cofactor biosynthesis; (R)-pantothenate biosynthesis; (R)-pantoate from 3-methyl-2-oxobutanoate: step 1/2. Its function is as follows. Catalyzes the reversible reaction in which hydroxymethyl group from 5,10-methylenetetrahydrofolate is transferred onto alpha-ketoisovalerate to form ketopantoate. In Xylella fastidiosa (strain M12), this protein is 3-methyl-2-oxobutanoate hydroxymethyltransferase.